Consider the following 432-residue polypeptide: Histidinol dehydrogenase (432 aa).

Residues Y130, Q191, and N214 each contribute to the NAD(+) site. Substrate-binding residues include S237, Q259, and H262. The Zn(2+) site is built by Q259 and H262. Residues E327 and H328 each act as proton acceptor in the active site. H328, D361, E415, and H420 together coordinate substrate. D361 is a Zn(2+) binding site. A Zn(2+)-binding site is contributed by H420.

Belongs to the histidinol dehydrogenase family. It depends on Zn(2+) as a cofactor.

The enzyme catalyses L-histidinol + 2 NAD(+) + H2O = L-histidine + 2 NADH + 3 H(+). The protein operates within amino-acid biosynthesis; L-histidine biosynthesis; L-histidine from 5-phospho-alpha-D-ribose 1-diphosphate: step 9/9. Catalyzes the sequential NAD-dependent oxidations of L-histidinol to L-histidinaldehyde and then to L-histidine. The polypeptide is Histidinol dehydrogenase (Agrobacterium fabrum (strain C58 / ATCC 33970) (Agrobacterium tumefaciens (strain C58))).